A 1000-amino-acid chain; its full sequence is Integrin alpha-PS5 (1000 aa).

FG-GAP repeat units follow at residues 15-74 (KHLK…GSCS), 75-137 (HYVL…DTPP), 145-198 (SLIP…AAQG), 199-261 (SYAV…GEIV), 262-323 (RKLH…FKFE), 324-379 (KKII…GLRD), and 386-448 (DAPS…SESR). A glycan (N-linked (GlcNAc...) asparagine) is linked at asparagine 58. N-linked (GlcNAc...) asparagine glycosylation occurs at asparagine 231. N-linked (GlcNAc...) asparagine glycans are attached at residues asparagine 516, asparagine 592, asparagine 622, asparagine 732, asparagine 771, asparagine 829, asparagine 842, asparagine 853, and asparagine 922. The chain crosses the membrane as a helical span at residues 930-950 (IWYIILSLIAGHLLLGAMTYI). The Cytoplasmic portion of the chain corresponds to 951–1000 (LYKLRFFKRGKKEELKRLLEEHRSETKEPATDCEGNQEEINVEMHSDLEN). Over residues 971–980 (EHRSETKEPA) the composition is skewed to basic and acidic residues. A disordered region spans residues 971-1000 (EHRSETKEPATDCEGNQEEINVEMHSDLEN).

The protein belongs to the integrin alpha chain family. Heterodimer of an alpha and a beta subunit. Alpha-PS5 associates with beta-PS. As to expression, expressed in all follicle cells overlying the oocyte during mid-oogenesis, the strongest expression is observed in the cells covering the anterior end of the oocyte and in the cells forming the dorsal appendages. After completion of oocyte enlargement, expression in main body follicle cells is down-regulated but persists strongly in the dorsal appendage forming cells. Expressed in lamellocytes.

The protein localises to the membrane. Its function is as follows. Possible role in cell-cell interactions. Minor involvement in the establishment of the oocyte anterior-posterior length. The chain is Integrin alpha-PS5 from Drosophila melanogaster (Fruit fly).